Reading from the N-terminus, the 1046-residue chain is SWI/SNF-related matrix-associated actin-dependent regulator of chromatin subfamily A member 1 (1046 aa).

The interval 27 to 61 (EQPGPSTFKEEGAAAAATEGTTATEKGEKKEKITS) is disordered. A compositionally biased stretch (low complexity) spans 39 to 50 (AAAAATEGTTAT). 2 positions are modified to phosphoserine: S120 and S123. The 166-residue stretch at 199–364 (ISLYENGVNG…WALLNFLLPD (166 aa)) folds into the Helicase ATP-binding domain. 212–219 (DEMGLGKT) serves as a coordination point for ATP. Residues 315–318 (DEAH) carry the DEAH box motif. One can recognise a Helicase C-terminal domain in the interval 494–645 (ALDKLLARIK…SIVIQQGRLI (152 aa)). Glycyl lysine isopeptide (Lys-Gly) (interchain with G-Cter in SUMO2) cross-links involve residues K654, K720, and K742. The disordered stretch occupies residues 819–840 (AQREEQKKIDGAEPLTPQETEE). Over residues 820 to 829 (QREEQKKIDG) the composition is skewed to basic and acidic residues. One can recognise an SANT 1 domain in the interval 847 to 899 (QGFTNWTKRDFNQFIKANEKYGRDDIDNIAREVEGKSPEEVMEYSAVFWERCN). Y946 is subject to Phosphotyrosine. An SANT 2 domain is found at 950-1014 (KGKNYTEEED…QRRCNTLISL (65 aa)). Positions 1003–1037 (EFQRRCNTLISLIEKENMEIEERERAEKKKRATKT) form a coiled coil. Residues 1025-1046 (RERAEKKKRATKTPMVKFSAFS) form a disordered region.

Belongs to the SNF2/RAD54 helicase family. ISWI subfamily. As to quaternary structure, may form homodimers. Component of the ACF-1 ISWI chromatin remodeling complex at least composed of SMARCA1 and BAZ1A, which regulates the spacing of histone octamers on the DNA template to facilitate access to DNA. Within the complex interacts with BAZ1A; the interaction is direct. Component of the WICH-1 ISWI chromatin remodeling complex at least composed of SMARCA1 and BAZ1B/WSTF. Within the complex interacts with BAZ1B/WSTF. Component of the NoRC-1 ISWI chromatin remodeling complex at least composed of SMARCA1 and BAZ2A/TIP5. Within the complex interacts with BAZ2A/TIP5. Component of the BRF-1 ISWI chromatin remodeling complex at least composed of SMARCA1 and BAZ2B. Within the complex interacts with BAZ2B. Component of the NURF-1 ISWI chromatin remodeling complex (also called the nucleosome-remodeling factor (NURF) complex) at least composed of SMARCA1, BPTF, RBBP4 and RBBP7. Within the complex interacts with BPTF. Within the complex interacts with RBBP4 and RBBP7. Component of the CERF-1 ISWI chromatin remodeling complex (also called the CECR2-containing-remodeling factor (CERF) complex) at least composed of CECR2 and SMARCA1. LUZP1 is detected as part of the CERF-1 complex in embryonic stem cells where it is involved in complex stabilization but is not detected in the complex in the testis. Component of the RSF-1 ISWI chromatin remodeling complex at least composed of SMARCA1 and RSF1. Within the complex interacts with RSF1. Interacts with PRLR. Interacts with ERCC6. Predominantly expressed in cortex, cerebellum, ovaries, testes, uterus and placenta.

It is found in the nucleus. The catalysed reaction is ATP + H2O = ADP + phosphate + H(+). Functionally, ATPase that possesses intrinsic ATP-dependent chromatin-remodeling activity. ATPase activity is substrate-dependent, and is increased when nucleosomes are the substrate, but is also catalytically active when DNA alone is the substrate. Catalytic subunit of ISWI chromatin-remodeling complexes, which form ordered nucleosome arrays on chromatin and facilitate access to DNA during DNA-templated processes such as DNA replication, transcription, and repair. Within the ISWI chromatin-remodeling complexes, slides edge- and center-positioned histone octamers away from their original location on the DNA template. Catalytic activity and histone octamer sliding propensity is regulated and determined by components of the ISWI chromatin-remodeling complexes. The BAZ1A-, BAZ1B-, BAZ2A- and BAZ2B-containing ISWI chromatin-remodeling complexes regulate the spacing of nucleosomes along the chromatin and have the ability to slide mononucleosomes to the center of a DNA template. The CECR2- and RSF1-containing ISWI chromatin-remodeling complexes do not have the ability to slide mononucleosomes to the center of a DNA template. Within the NURF-1 and CERF-1 ISWI chromatin remodeling complexes, nucleosomes are the preferred substrate for its ATPase activity. Within the NURF-1 ISWI chromatin-remodeling complex, binds to the promoters of En1 and En2 to positively regulate their expression and promote brain development. May promote neurite outgrowth. May be involved in the development of luteal cells. Facilitates nucleosome assembly during DNA replication, ensuring replication fork progression and genomic stability by preventing replication stress and nascent DNA gaps. The polypeptide is SWI/SNF-related matrix-associated actin-dependent regulator of chromatin subfamily A member 1 (Smarca1) (Mus musculus (Mouse)).